Reading from the N-terminus, the 445-residue chain is Xylose isomerase (445 aa).

Active-site residues include His-107 and Asp-110. Positions 238, 274, 277, 302, 313, 315, and 345 each coordinate Mg(2+).

This sequence belongs to the xylose isomerase family. Homotetramer. It depends on Mg(2+) as a cofactor.

The protein resides in the cytoplasm. The catalysed reaction is alpha-D-xylose = alpha-D-xylulofuranose. This is Xylose isomerase from Bacillus cereus (strain ATCC 10987 / NRS 248).